Here is a 482-residue protein sequence, read N- to C-terminus: Glycogen synthase (482 aa).

ADP-alpha-D-glucose is bound at residue Lys-18.

The protein belongs to the glycosyltransferase 1 family. Bacterial/plant glycogen synthase subfamily.

The enzyme catalyses [(1-&gt;4)-alpha-D-glucosyl](n) + ADP-alpha-D-glucose = [(1-&gt;4)-alpha-D-glucosyl](n+1) + ADP + H(+). Its pathway is glycan biosynthesis; glycogen biosynthesis. Functionally, synthesizes alpha-1,4-glucan chains using ADP-glucose. This is Glycogen synthase from Rhodopseudomonas palustris (strain HaA2).